The following is a 311-amino-acid chain: Glycine--tRNA ligase alpha subunit (311 aa).

It belongs to the class-II aminoacyl-tRNA synthetase family. In terms of assembly, tetramer of two alpha and two beta subunits.

It localises to the cytoplasm. It catalyses the reaction tRNA(Gly) + glycine + ATP = glycyl-tRNA(Gly) + AMP + diphosphate. The sequence is that of Glycine--tRNA ligase alpha subunit from Bradyrhizobium diazoefficiens (strain JCM 10833 / BCRC 13528 / IAM 13628 / NBRC 14792 / USDA 110).